The chain runs to 912 residues: Protein translocase subunit SecA (912 aa).

Residues Gln87, 105 to 109, and Asp508 each bind ATP; that span reads GEGKT. The segment at 855–912 is disordered; the sequence is QHQDAGGYGADEEVEQMQGGNAPVPVSQVTRDEPKVGRNDPCPCGSGKKYKHCHGQLS. The Zn(2+) site is built by Cys896, Cys898, Cys907, and His908. A compositionally biased stretch (basic residues) spans 902-912; sequence KKYKHCHGQLS.

It belongs to the SecA family. As to quaternary structure, monomer and homodimer. Part of the essential Sec protein translocation apparatus which comprises SecA, SecYEG and auxiliary proteins SecDF-YajC and YidC. The cofactor is Zn(2+).

The protein resides in the cell inner membrane. The protein localises to the cytoplasm. The enzyme catalyses ATP + H2O + cellular proteinSide 1 = ADP + phosphate + cellular proteinSide 2.. In terms of biological role, part of the Sec protein translocase complex. Interacts with the SecYEG preprotein conducting channel. Has a central role in coupling the hydrolysis of ATP to the transfer of proteins into and across the cell membrane, serving both as a receptor for the preprotein-SecB complex and as an ATP-driven molecular motor driving the stepwise translocation of polypeptide chains across the membrane. This Xanthomonas campestris pv. campestris (strain B100) protein is Protein translocase subunit SecA.